A 425-amino-acid chain; its full sequence is uncharacterized protein (425 aa).

The F-box domain occupies 2 to 53; that stretch reads SFNLLDLPIVPRQKALKYLEPIDLFELSLCSKRMAQSVRDLKIEASAHFITL.

This is an uncharacterized protein from Caenorhabditis elegans.